The sequence spans 508 residues: Arabinose import ATP-binding protein AraG (508 aa).

ABC transporter domains follow at residues 5–240 and 250–496; these read LEFQ…MVGR and ARTL…LPDA. 37 to 44 contributes to the ATP binding site; the sequence is GENGAGKS.

Belongs to the ABC transporter superfamily. Arabinose importer (TC 3.A.1.2.2) family. The complex is composed of two ATP-binding proteins (AraG), two transmembrane proteins (AraH) and a solute-binding protein (AraF).

Its subcellular location is the cell inner membrane. It catalyses the reaction L-arabinose(out) + ATP + H2O = L-arabinose(in) + ADP + phosphate + H(+). In terms of biological role, part of the ABC transporter complex AraFGH involved in arabinose import. Responsible for energy coupling to the transport system. This Rhizobium meliloti (strain 1021) (Ensifer meliloti) protein is Arabinose import ATP-binding protein AraG.